Consider the following 447-residue polypeptide: Alpha-1,3-mannosyl-glycoprotein 2-beta-N-acetylglucosaminyltransferase (447 aa).

The Cytoplasmic portion of the chain corresponds to 1–6 (MLKKQS). The helical; Signal-anchor for type II membrane protein transmembrane segment at 7 to 29 (AGLVLWGAIIFVGWNALLLLFFW) threads the bilayer. Residues 30–447 (TRPAPGRLPS…TWNGYDPSWN (418 aa)) are Lumenal-facing. Cys-115 and Cys-145 form a disulfide bridge. The substrate site is built by Arg-117, Asp-144, His-190, and Asp-212. Asp-213 is a binding site for Mn(2+). The cysteines at positions 239 and 305 are disulfide-linked. The active-site Proton acceptor is Asp-291. Position 322 (Ser-322) interacts with substrate.

The protein belongs to the glycosyltransferase 13 family. Interacts with MGAT4D. Interacts with BRI3. The cofactor is Mn(2+). As to expression, appears to be present in all tissues.

It localises to the golgi apparatus membrane. The protein resides in the cytoplasm. Its subcellular location is the perinuclear region. It carries out the reaction N(4)-(alpha-D-Man-(1-&gt;3)-[alpha-D-Man-(1-&gt;3)-[alpha-D-Man-(1-&gt;6)]-alpha-D-Man-(1-&gt;6)]-beta-D-Man-(1-&gt;4)-beta-D-GlcNAc-(1-&gt;4)-beta-D-GlcNAc)-L-asparaginyl-[protein] (N-glucan mannose isomer 5A1,2) + UDP-N-acetyl-alpha-D-glucosamine = N(4)-{beta-D-GlcNAc-(1-&gt;2)-alpha-D-Man-(1-&gt;3)-[alpha-D-Man-(1-&gt;3)-[alpha-D-Man-(1-&gt;6)]-alpha-D-Man-(1-&gt;6)]-beta-D-Man-(1-&gt;4)-beta-D-GlcNAc-(1-&gt;4)-beta-D-GlcNAc}-L-asparaginyl-[protein] + UDP + H(+). It participates in protein modification; protein glycosylation. Functionally, initiates complex N-linked carbohydrate formation. Essential for the conversion of high-mannose to hybrid and complex N-glycans. The polypeptide is Alpha-1,3-mannosyl-glycoprotein 2-beta-N-acetylglucosaminyltransferase (Mgat1) (Rattus norvegicus (Rat)).